Here is a 479-residue protein sequence, read N- to C-terminus: Ankyrin repeat, SAM and basic leucine zipper domain-containing protein 1 (479 aa).

Phosphoserine occurs at positions 22 and 24. ANK repeat units follow at residues 49–78 (EKNETFKKALTTGDILLVKELLNSGISVDS), 82–111 (YGWTPLMYAASVSNVELVRVLLDRGANASF), 114–148 (DKQTILITACSARGSEEQILKCVELLLSRNADPNV), 152–181 (RLMTPIMYAARDGHTQVVALLVAHGAEVNT), 185–214 (NGYTALTWAARQGHKNVVLKLLELGANKML), and 218–247 (DGKTPSEIAKRNKHVEIFSFLSLTLNPLEG). In terms of domain architecture, SAM spans 276-338 (SYTALGDLEI…KILDALKELQ (63 aa)).

As to quaternary structure, interacts with DDX4, PIWIL1, RANBP9 and TDRD1.

It is found in the cytoplasm. In terms of biological role, plays a central role during spermatogenesis by repressing transposable elements and preventing their mobilization, which is essential for the germline integrity. Acts via the piRNA metabolic process, which mediates the repression of transposable elements during meiosis by forming complexes composed of piRNAs and Piwi proteins and governs the methylation and subsequent repression of transposons. Its association with pi-bodies suggests a participation in the primary piRNAs metabolic process. Required prior to the pachytene stage to facilitate the production of multiple types of piRNAs, including those associated with repeats involved in the regulation of retrotransposons. May act by mediating protein-protein interactions during germ cell maturation. The sequence is that of Ankyrin repeat, SAM and basic leucine zipper domain-containing protein 1 (ASZ1) from Rhinolophus ferrumequinum (Greater horseshoe bat).